We begin with the raw amino-acid sequence, 334 residues long: D-fructose 1,6-bisphosphatase class 2/sedoheptulose 1,7-bisphosphatase (334 aa).

4 residues coordinate Mn(2+): Asp33, Glu57, Asp85, and Glu88. Substrate contacts are provided by residues 88–90 (EGT), Tyr119, 164–166 (RAR), and 186–188 (DGD). Position 213 (Glu213) interacts with Mn(2+).

This sequence belongs to the FBPase class 2 family. Homotetramer. Mn(2+) serves as cofactor.

The catalysed reaction is beta-D-fructose 1,6-bisphosphate + H2O = beta-D-fructose 6-phosphate + phosphate. It carries out the reaction D-sedoheptulose 1,7-bisphosphate + H2O = D-sedoheptulose 7-phosphate + phosphate. It participates in carbohydrate biosynthesis; Calvin cycle. Catalyzes the hydrolysis of fructose 1,6-bisphosphate (Fru 1,6-P2) and sedoheptulose 1,7-bisphosphate (Sed 1,7-P2) to fructose 6-phosphate and sedoheptulose 7-phosphate, respectively. This Synechococcus sp. (strain CC9311) protein is D-fructose 1,6-bisphosphatase class 2/sedoheptulose 1,7-bisphosphatase.